We begin with the raw amino-acid sequence, 594 residues long: UvrABC system protein C (594 aa).

A GIY-YIG domain is found at 14–91 (DQPGCYLMKD…IKKYDPKYNI (78 aa)). A UVR domain is found at 196 to 231 (KEVRSELEIKMYEASEKLEFERAKELRDQIAHIDAI).

This sequence belongs to the UvrC family. As to quaternary structure, interacts with UvrB in an incision complex.

It localises to the cytoplasm. The UvrABC repair system catalyzes the recognition and processing of DNA lesions. UvrC both incises the 5' and 3' sides of the lesion. The N-terminal half is responsible for the 3' incision and the C-terminal half is responsible for the 5' incision. The polypeptide is UvrABC system protein C (Bacillus cereus (strain B4264)).